The chain runs to 673 residues: Protein VirD3 (673 aa).

6 disordered regions span residues 36–73 (VAGE…GRLG), 171–216 (SPVN…GTSV), 229–409 (ERDT…LRSS), 478–497 (RLNG…LEDF), 520–552 (EKGK…VTPL), and 585–673 (DSSR…GCGR). Composition is skewed to polar residues over residues 171-183 (SPVN…SNWQ), 193-216 (VQPS…GTSV), 234-246 (SETT…TISS), and 268-277 (QSLSVTVTTP). Over residues 278–287 (NSNAEASSHS) the composition is skewed to low complexity. Residues 288 to 303 (AHTETLDDVSSDRSSE) show a composition bias toward basic and acidic residues. Basic and acidic residues-rich tracts occupy residues 520–534 (EKGK…DTRF) and 638–673 (AAEH…GCGR).

In Agrobacterium fabrum (strain C58 / ATCC 33970) (Agrobacterium tumefaciens (strain C58)), this protein is Protein VirD3 (virD3).